Here is a 174-residue protein sequence, read N- to C-terminus: MVYHSQFNDESAGFRLVGNVPILPLKTTHKGPAPKGDANSVDIIDEALDLFKANILFRNFEVQGNGDRVLIYLTLYITKCLLKIAPMNKADAEKALFLIAQEQFSIPGESAFPLGGLVTVPNTRDAADTLRQYFTQLRLELGVRLCQRVYAVDPSKANKWWICFSKRKFLNKAL.

This sequence belongs to the ARPC3 family. Component of the Arp2/3 complex composed of arpB/Arp2, arpC/Arp3, arcA/p41-arc, arcB/p34-arc, arcC/p21-arc, arcD/p20-arc and arcE/p16-arc. Interacts with carmil (via the region between the LRR domain and COOH-terminal proline-rich domain); carmil is required for Arp2/3-dependent actin nucleation. Arp2/3 complex, MyoB, MyoC, and the alpha and beta subunits of capping protein all form a larger complex with carmil.

The protein resides in the cytoplasm. The protein localises to the cytoskeleton. It localises to the cytosol. Its subcellular location is the cell cortex. It is found in the cell projection. The protein resides in the pseudopodium. In terms of biological role, functions as a component of the Arp2/3 complex which is involved in regulation of actin polymerization and together with an activating nucleation-promoting factor (NPF) mediates the formation of branched actin networks. Seems to contact the pointed end of the daughter actin filament. The Arp2/3 complex is involved in organizing the actin system in cell motility and chemotaxis, in phagocytosis and macropinocytosis, at late steps of endosome processing, and in mitosis. In concert with a group of other proteins, the Arp2/3 complex plays a general role in the rapid activation and adaptation of the actin system to its multiple functions. The protein is Actin-related protein 2/3 complex subunit 3 (arcC) of Dictyostelium discoideum (Social amoeba).